We begin with the raw amino-acid sequence, 536 residues long: Glutamate--tRNA ligase, mitochondrial (536 aa).

48–50 is an L-glutamate binding site; the sequence is RFA. The 'HIGH' region motif lies at 53-61; that stretch reads PTGFLHLGS. His58 contacts ATP. L-glutamate is bound by residues Glu84, 235–239, and Arg253; that span reads YHLAN. ATP is bound by residues Glu256 and 291 to 295; that span reads KLSKR. A 'KMSKS' region motif is present at residues 291–295; that stretch reads KLSKR.

This sequence belongs to the class-I aminoacyl-tRNA synthetase family. Glutamate--tRNA ligase type 1 subfamily.

It is found in the mitochondrion matrix. The enzyme catalyses tRNA(Glu) + L-glutamate + ATP = L-glutamyl-tRNA(Glu) + AMP + diphosphate. Functionally, catalyzes the attachment of glutamate to tRNA(Glu) in a two-step reaction: glutamate is first activated by ATP to form Glu-AMP and then transferred to the acceptor end of tRNA(Glu). This chain is Glutamate--tRNA ligase, mitochondrial (MSE1), found in Saccharomyces cerevisiae (strain ATCC 204508 / S288c) (Baker's yeast).